The chain runs to 311 residues: Salutaridine reductase (311 aa).

NADP(+) contacts are provided by residues 21-24 (NKGI), Arg-44, 70-71 (DV), and Asn-98. Residues Tyr-129 and Ser-180 each contribute to the substrate site. Residues Tyr-236, Lys-240, and 267–272 (VKTEMN) contribute to the NADP(+) site. The active-site Proton acceptor is the Tyr-236. Cys-263 and Cys-305 are oxidised to a cystine.

It belongs to the short-chain dehydrogenases/reductases (SDR) family.

It catalyses the reaction (7S)-salutaridinol + NADP(+) = salutaridine + NADPH + H(+). It participates in alkaloid biosynthesis; morphine biosynthesis. Strong substrate inhibition. Was thought to be due to mutually exclusive productive and non-productive modes of substrate binding in the active site. Alternatively, SALR may undergo significant conformational changes during catalytic turnover. Short-chain dehydrogenases/reductases involved in biosynthesis of morphinan-type benzylisoquinoline and opiate alkaloids natural products. Catalyzes specifically the stereospecific conversion of salutaridine to salutaridinol. In Papaver somniferum (Opium poppy), this protein is Salutaridine reductase.